The primary structure comprises 198 residues: A-type ATP synthase subunit E (198 aa).

The protein belongs to the V-ATPase E subunit family. Has multiple subunits with at least A(3), B(3), C, D, E, F, H, I and proteolipid K(x).

It localises to the cell membrane. In terms of biological role, component of the A-type ATP synthase that produces ATP from ADP in the presence of a proton gradient across the membrane. This chain is A-type ATP synthase subunit E, found in Pyrococcus furiosus (strain ATCC 43587 / DSM 3638 / JCM 8422 / Vc1).